We begin with the raw amino-acid sequence, 321 residues long: MHIGQFQLTNRLIAAPMAGISDRPFRALCHAMGAGMTVSEMLSSNPEVWRSDKSRLRMVHSDEPGIRAVQIAGCDPDEMAAARRINADSGAQIIDINMGCPAKKVNRKMAGSALLQYPDLVKQILSTVVKAVDVPVTLKIRTGWAPEHRNCVEIAKLAEDCGIQALTIHGRTRACLFNGFAEYDSIRAVKQAVSIPIIANGDITDPHKARAVLDYTGADALMIGRAAQGRPWIFREIQHYLDTGELLAPLPLVEVKRLLIEHIRELHDFYGPGKGFRIARKHVSWYLQEHAPNDQFRRTFNAIEDASEQLEALKAYFENLA.

FMN-binding positions include 16 to 18 (PMA) and glutamine 70. Cysteine 100 functions as the Proton donor in the catalytic mechanism. FMN contacts are provided by residues lysine 139, 200-202 (NGD), and 224-225 (GR).

This sequence belongs to the Dus family. DusB subfamily. Requires FMN as cofactor.

It carries out the reaction a 5,6-dihydrouridine in tRNA + NAD(+) = a uridine in tRNA + NADH + H(+). It catalyses the reaction a 5,6-dihydrouridine in tRNA + NADP(+) = a uridine in tRNA + NADPH + H(+). Catalyzes the synthesis of 5,6-dihydrouridine (D), a modified base found in the D-loop of most tRNAs, via the reduction of the C5-C6 double bond in target uridines. In Pectobacterium carotovorum (Erwinia carotovora), this protein is tRNA-dihydrouridine synthase B.